The sequence spans 48 residues: uncharacterized protein (48 aa).

Residues 1-48 form a disordered region; the sequence is MTKIPINIPATSGKIKFGITPSSNKSPSLSPSPSNGQLGGGRGYILEP. The span at 21-36 shows a compositional bias: low complexity; the sequence is PSSNKSPSLSPSPSNG. Gly residues predominate over residues 37–48; that stretch reads QLGGGRGYILEP.

This is an uncharacterized protein from Dictyostelium discoideum (Social amoeba).